A 43-amino-acid chain; its full sequence is Potassium channel toxin gamma-KTx 4.9 (43 aa).

Cystine bridges form between cysteine 5/cysteine 23, cysteine 11/cysteine 34, cysteine 20/cysteine 39, and cysteine 24/cysteine 41.

Belongs to the ergtoxin family. Gamma-KTx 4 subfamily. As to expression, expressed by the venom gland.

The protein localises to the secreted. Its function is as follows. Reversibly blocks Kv11/ERG potassium channels. In Centruroides sculpturatus (Arizona bark scorpion), this protein is Potassium channel toxin gamma-KTx 4.9.